The primary structure comprises 241 residues: Transcription factor HEC1 (241 aa).

The bHLH domain maps to 128 to 177 (ISKDPQSVAARHRRERISERIRILQRLVPGGTKMDTASMLDEAIHYVKFL).

In terms of assembly, homodimer. Interacts with SPT. Interacts with BZIP30. As to expression, flowers, especially in gynoecium.

The protein localises to the nucleus. Required for the female reproductive tract development and fertility. The polypeptide is Transcription factor HEC1 (HEC1) (Arabidopsis thaliana (Mouse-ear cress)).